The following is a 766-amino-acid chain: General transcription and DNA repair factor IIH helicase/translocase subunit XPB2 (766 aa).

The disordered stretch occupies residues Met1–Glu56. The segment covering Asp31 to Arg41 has biased composition (acidic residues). A compositionally biased stretch (basic and acidic residues) spans Asp42 to Glu56. The region spanning Met293–Leu455 is the Helicase ATP-binding domain. Residue Leu306–Ser313 coordinates ATP. The DEVH box motif lies at Asp408 to His411. The region spanning Arg510–Ser676 is the Helicase C-terminal domain. The segment covering Ser739–Ser748 has biased composition (polar residues). Positions Ser739 to Val766 are disordered. Positions Lys749–Tyr765 match the Nuclear localization signal motif. A compositionally biased stretch (basic residues) spans Arg757 to Val766.

This sequence belongs to the helicase family. RAD25/XPB subfamily. In terms of assembly, component of the 7-subunit TFIIH core complex composed of XPB, XPD, TFB1/GTF2H1, GTF2H2/P44, TFB4/GTF2H3, TFB2/GTF2H4 and TFB5/GTF2H5, which is active in NER. The core complex associates with the 3-subunit CDK-activating kinase (CAK) module composed of CYCH1/cyclin H1, CDKD and MAT1/At4g30820 to form the 10-subunit holoenzyme (holo-TFIIH) active in transcription. Expressed ubiquitously.

The protein resides in the nucleus. It catalyses the reaction Couples ATP hydrolysis with the unwinding of duplex DNA by translocating in the 3'-5' direction.. The enzyme catalyses ATP + H2O = ADP + phosphate + H(+). Functionally, ATP-dependent 3'-5' DNA helicase/translocase; binds dsDNA rather than ssDNA, unzipping it in a translocase rather than classical helicase activity. Component of the general transcription and DNA repair factor IIH (TFIIH) core complex. When complexed to CDK-activating kinase (CAK), involved in RNA transcription by RNA polymerase II. The ATPase activity of XPB/ERCC3, but not its helicase activity, is required for DNA opening; it may wrap around the damaged DNA wedging it open, causing localized melting and twisting that allows XPD/ERCC2 helicase to anchor. The ATP-dependent helicase activity of XPB/ERCC3 may be required for promoter escape. Also involved in transcription-coupled nucleotide excision repair (NER) of damaged DNA. In NER, TFIIH acts by opening DNA around the lesion to allow the excision of the damaged oligonucleotide and its replacement by a new DNA fragment. The structure of the TFIIH transcription complex differs from the NER-TFIIH complex. Partially complements UV sensitivity of a yeast SSL2 mutation. This is General transcription and DNA repair factor IIH helicase/translocase subunit XPB2 (XPB2) from Arabidopsis thaliana (Mouse-ear cress).